Reading from the N-terminus, the 290-residue chain is Shikimate dehydrogenase (NADP(+)) (290 aa).

Shikimate is bound by residues 20-22 and Thr67; that span reads SLS. Lys71 (proton acceptor) is an active-site residue. Residues Asn92 and Asp107 each coordinate shikimate. NADP(+) is bound by residues 130–134 and Leu227; that span reads GAGGA. Tyr229 lines the shikimate pocket. NADP(+) is bound at residue Gly250.

The protein belongs to the shikimate dehydrogenase family. Homodimer.

The catalysed reaction is shikimate + NADP(+) = 3-dehydroshikimate + NADPH + H(+). Its pathway is metabolic intermediate biosynthesis; chorismate biosynthesis; chorismate from D-erythrose 4-phosphate and phosphoenolpyruvate: step 4/7. Its function is as follows. Involved in the biosynthesis of the chorismate, which leads to the biosynthesis of aromatic amino acids. Catalyzes the reversible NADPH linked reduction of 3-dehydroshikimate (DHSA) to yield shikimate (SA). The protein is Shikimate dehydrogenase (NADP(+)) of Syntrophomonas wolfei subsp. wolfei (strain DSM 2245B / Goettingen).